The primary structure comprises 295 residues: Ribosomal protein L11 methyltransferase (295 aa).

The S-adenosyl-L-methionine site is built by T146, G167, D189, and N231.

The protein belongs to the methyltransferase superfamily. PrmA family.

It localises to the cytoplasm. It catalyses the reaction L-lysyl-[protein] + 3 S-adenosyl-L-methionine = N(6),N(6),N(6)-trimethyl-L-lysyl-[protein] + 3 S-adenosyl-L-homocysteine + 3 H(+). Methylates ribosomal protein L11. This is Ribosomal protein L11 methyltransferase from Vibrio campbellii (strain ATCC BAA-1116).